Consider the following 216-residue polypeptide: MOB kinase activator 3B (216 aa).

Residues C82, C87, H164, and H169 each coordinate Zn(2+).

Belongs to the MOB1/phocein family.

Functionally, modulates LATS1 expression in the Hippo signaling pathway which plays a pivotal role in organ size control and tumor suppression by restricting proliferation and promoting apoptosis. The protein is MOB kinase activator 3B of Homo sapiens (Human).